Consider the following 346-residue polypeptide: Dihydroorotase (346 aa).

Residues histidine 13 and histidine 15 each coordinate Zn(2+). Residues 15 to 17 (HLR) and asparagine 41 contribute to the substrate site. Positions 99, 136, and 174 each coordinate Zn(2+). N6-carboxylysine is present on lysine 99. Histidine 136 serves as a coordination point for substrate. Leucine 219 contacts substrate. Aspartate 247 serves as a coordination point for Zn(2+). The active site involves aspartate 247. Positions 251 and 263 each coordinate substrate.

Belongs to the metallo-dependent hydrolases superfamily. DHOase family. Class II DHOase subfamily. As to quaternary structure, homodimer. It depends on Zn(2+) as a cofactor.

It carries out the reaction (S)-dihydroorotate + H2O = N-carbamoyl-L-aspartate + H(+). The protein operates within pyrimidine metabolism; UMP biosynthesis via de novo pathway; (S)-dihydroorotate from bicarbonate: step 3/3. Catalyzes the reversible cyclization of carbamoyl aspartate to dihydroorotate. In Rhizobium rhizogenes (strain K84 / ATCC BAA-868) (Agrobacterium radiobacter), this protein is Dihydroorotase.